We begin with the raw amino-acid sequence, 249 residues long: 2,3-bisphosphoglycerate-dependent phosphoglycerate mutase (249 aa).

Residues 8–15 (RHGQSVWN), 21–22 (TG), Arg60, 87–90 (ERHY), Lys98, 114–115 (RR), and 183–184 (GN) each bind substrate. Catalysis depends on His9, which acts as the Tele-phosphohistidine intermediate. The active-site Proton donor/acceptor is Glu87.

The protein belongs to the phosphoglycerate mutase family. BPG-dependent PGAM subfamily. In terms of assembly, homodimer.

The enzyme catalyses (2R)-2-phosphoglycerate = (2R)-3-phosphoglycerate. It participates in carbohydrate degradation; glycolysis; pyruvate from D-glyceraldehyde 3-phosphate: step 3/5. Functionally, catalyzes the interconversion of 2-phosphoglycerate and 3-phosphoglycerate. In Solidesulfovibrio magneticus (strain ATCC 700980 / DSM 13731 / RS-1) (Desulfovibrio magneticus), this protein is 2,3-bisphosphoglycerate-dependent phosphoglycerate mutase.